The following is a 433-amino-acid chain: Enolase (433 aa).

Position 167 (Gln167) interacts with (2R)-2-phosphoglycerate. Catalysis depends on Glu209, which acts as the Proton donor. 3 residues coordinate Mg(2+): Asp246, Glu291, and Asp318. Lys326 carries the post-translational modification N6-acetyllysine. The (2R)-2-phosphoglycerate site is built by Lys343, Arg372, Ser373, and Lys394. Lys343 serves as the catalytic Proton acceptor. Lys343 is modified (N6-(2-hydroxyisobutyryl)lysine).

The protein belongs to the enolase family. In terms of assembly, component of the RNA degradosome, a multiprotein complex involved in RNA processing and mRNA degradation. Mg(2+) serves as cofactor. In terms of processing, acetylated and 2-hydroxyisobutyrylated at Lys-326 and Lys-343, respectively, reducing the enolase activity. Deacetylated and de-2-hydroxyisobutyrylated by NpdA/CobB, increasing the enolase activity.

The protein resides in the cytoplasm. It localises to the secreted. It is found in the cell surface. It carries out the reaction (2R)-2-phosphoglycerate = phosphoenolpyruvate + H2O. The protein operates within carbohydrate degradation; glycolysis; pyruvate from D-glyceraldehyde 3-phosphate: step 4/5. In terms of biological role, catalyzes the reversible conversion of 2-phosphoglycerate (2-PG) into phosphoenolpyruvate (PEP). It is essential for the degradation of carbohydrates via glycolysis. This is Enolase from Proteus mirabilis (strain HI4320).